Here is a 508-residue protein sequence, read N- to C-terminus: Putative POTE ankyrin domain family member M (508 aa).

5 ANK repeats span residues 172–201 (QKRT…QLNI), 205–234 (KKRT…DPNI), 238–267 (YGNT…DIES), 271–300 (HGLT…NLNA), and 304–333 (YGRT…DVSS). A disordered region spans residues 369 to 487 (SSENSNPEQD…KQLSEEQNTG (119 aa)). Composition is skewed to basic and acidic residues over residues 377 to 392 (QDLK…RLKG) and 406 to 421 (EINK…EMKK). A compositionally biased stretch (polar residues) spans 476–487 (TQKQLSEEQNTG).

It belongs to the POTE family.

The protein is Putative POTE ankyrin domain family member M (POTEM) of Homo sapiens (Human).